The chain runs to 271 residues: Tryptophan synthase alpha chain (271 aa).

Active-site proton acceptor residues include glutamate 49 and aspartate 60.

This sequence belongs to the TrpA family. Tetramer of two alpha and two beta chains.

The catalysed reaction is (1S,2R)-1-C-(indol-3-yl)glycerol 3-phosphate + L-serine = D-glyceraldehyde 3-phosphate + L-tryptophan + H2O. It participates in amino-acid biosynthesis; L-tryptophan biosynthesis; L-tryptophan from chorismate: step 5/5. Its function is as follows. The alpha subunit is responsible for the aldol cleavage of indoleglycerol phosphate to indole and glyceraldehyde 3-phosphate. The chain is Tryptophan synthase alpha chain from Burkholderia thailandensis (strain ATCC 700388 / DSM 13276 / CCUG 48851 / CIP 106301 / E264).